Here is a 429-residue protein sequence, read N- to C-terminus: Large ribosomal subunit protein mL37 (429 aa).

Residues 1–29 (MALRPVVLRRAPAHSRGILTRPGPPRPRG) constitute a mitochondrion transit peptide. The segment at 12-45 (PAHSRGILTRPGPPRPRGPLPRTPWTTRGPPPDQ) is disordered. A compositionally biased stretch (pro residues) spans 22–33 (PGPPRPRGPLPR).

Belongs to the mitochondrion-specific ribosomal protein mL37 family. In terms of assembly, component of the mitochondrial ribosome large subunit (39S) which comprises a 16S rRNA and about 50 distinct proteins.

The protein resides in the mitochondrion. This chain is Large ribosomal subunit protein mL37 (MRPL37), found in Gallus gallus (Chicken).